Consider the following 862-residue polypeptide: DNA topoisomerase 3-beta-1 (862 aa).

Residues 3-153 form the Toprim domain; that stretch reads TVLMVAEKPS…EKTVFRARFS (151 aa). Residues 171-593 form the Topo IA-type catalytic domain; the sequence is DHNEALSVDA…HTLDIFKRKF (423 aa). The active-site O-(5'-phospho-DNA)-tyrosine intermediate is Y336. Positions 820–855 are disordered; sequence HPMHRGGPGRRQGRGRGRGRRPPGKPNPRRPKDKMS. Basic residues predominate over residues 821–851; sequence PMHRGGPGRRQGRGRGRGRRPPGKPNPRRPK.

This sequence belongs to the type IA topoisomerase family. Highly expressed in testis.

The catalysed reaction is ATP-independent breakage of single-stranded DNA, followed by passage and rejoining.. Releases the supercoiling and torsional tension of DNA introduced during the DNA replication and transcription by transiently cleaving and rejoining one strand of the DNA duplex. Introduces a single-strand break via transesterification at a target site in duplex DNA. The scissile phosphodiester is attacked by the catalytic tyrosine of the enzyme, resulting in the formation of a DNA-(5'-phosphotyrosyl)-enzyme intermediate and the expulsion of a 3'-OH DNA strand. The free DNA strand than undergoes passage around the unbroken strand thus removing DNA supercoils. Finally, in the religation step, the DNA 3'-OH attacks the covalent intermediate to expel the active-site tyrosine and restore the DNA phosphodiester backbone. Possesses negatively supercoiled DNA relaxing activity. This chain is DNA topoisomerase 3-beta-1 (Top3b), found in Mus musculus (Mouse).